The primary structure comprises 2748 residues: Nuclear migration protein NUM1 (2748 aa).

A compositionally biased stretch (basic residues) spans 1–10 (MSHNNRHKKN). 2 disordered regions span residues 1-36 (MSHNNRHKKNNDKDSSAGQYANSIDNSLSQESVSTN) and 290-312 (YYQKQHTSDTTVTSDPDSEGTTS). Positions 17 to 36 (AGQYANSIDNSLSQESVSTN) are enriched in polar residues. Positions 293–304 (KQHTSDTTVTSD) are enriched in low complexity. A run of 12 repeats spans residues 593–656 (PSLE…KLEQ), 657–727 (PSLE…EVEQ), 728–798 (PSLA…EVEQ), 799–862 (PSLA…KLEQ), 863–926 (PSLA…KLEQ), 927–990 (PSLA…KLEQ), 991–1054 (PSLE…KLEQ), 1055–1118 (PSLE…KLEQ), 1119–1182 (PSLE…KLEQ), 1183–1246 (PSLA…KLEQ), 1247–1310 (PSLA…KLEQ), and 1311–1374 (PSLE…KLEQ). The interval 593–1384 (PSLEYLVEHA…PSLEYLVKHA (792 aa)) is 13 X tandem repeats. Residues S611, S675, and S746 each carry the phosphoserine modification. Phosphoserine occurs at positions 881, 945, and 1009. A phosphoserine mark is found at S1201, S1265, and S1329. Residues 1375-1384 (PSLEYLVKHA) form a 13; truncated repeat. The segment at 2111 to 2133 (ERAERIDEQSINTTSSNSTTTSS) is disordered. Residues 2122–2133 (NTTSSNSTTTSS) show a composition bias toward low complexity. 8 positions are modified to phosphoserine: S2162, S2164, S2197, S2217, S2220, S2221, S2360, and S2424. Residues 2444 to 2460 (KEDKKGQATASKHEYVS) show a composition bias toward basic and acidic residues. The interval 2444–2536 (KEDKKGQATA…HSSRNTPASR (93 aa)) is disordered. A compositionally biased stretch (polar residues) spans 2465–2474 (NKTSTVSTKS). Over residues 2492–2503 (SESHPQIEEQSH) the composition is skewed to basic and acidic residues. Residue S2494 is modified to Phosphoserine. Positions 2504–2514 (RTNHHKHHKRQ) are enriched in basic residues. The span at 2516–2532 (SLNSNSTSKTTHSSRNT) shows a compositional bias: low complexity. S2545 carries the post-translational modification Phosphoserine. Positions 2573-2683 (QTVIGEYLFK…WYNSLRYLLQ (111 aa)) constitute a PH domain. The interval 2707 to 2748 (IFPLPGENTKSSSKRLSASRRSVSTRSLRHRVPQSRSFGNLR) is disordered. A compositionally biased stretch (low complexity) spans 2720–2730 (KRLSASRRSVS).

As to quaternary structure, interacts with PAC11 when DYN1 is present, and TUB3.

The protein resides in the bud tip. Functionally, controls nuclear migration. NUM1 specifically controls the interaction of the bud neck cytoskeleton with the pre-divisional G2 nucleus. Functions in dynein-anchoring. During late anaphase forms dynein-interacting cortical microtubule capture sites at both cellular poles. This leads to dynein-dependent sliding of the microtubules in the bud. This chain is Nuclear migration protein NUM1 (NUM1), found in Saccharomyces cerevisiae (strain ATCC 204508 / S288c) (Baker's yeast).